Here is a 1004-residue protein sequence, read N- to C-terminus: Glutamate [NMDA] receptor subunit 1 (1004 aa).

Residues 1–39 (MAGTDSPAAARFVYRCLLFAPAIVVGLLLPLTLPPIAAA) form the signal peptide. Topologically, residues 40–585 (QRHTASDNPS…TLVSFLQPFS (546 aa)) are extracellular. N-linked (GlcNAc...) asparagine glycans are attached at residues asparagine 270, asparagine 326, asparagine 357, asparagine 409, asparagine 466, asparagine 493, and asparagine 513. Glycine contacts are provided by residues 542 to 544 (PLT) and arginine 549. The helical transmembrane segment at 586–606 (NTLWILVMVSVHVVALVLYLL) threads the bilayer. The Cytoplasmic portion of the chain corresponds to 607-663 (DRFSPFGRFKLSHSDSNEEKALNLSSAVWFAWGVLLNSGIGEGTPRSFSARVLGMVW). A helical transmembrane segment spans residues 664–684 (AGFAMIIVASYTANLAAFLVL). Topologically, residues 685 to 843 (ERPKTKLSGI…KTPNTLGLKN (159 aa)) are extracellular. The N-linked (GlcNAc...) asparagine glycan is linked to asparagine 705. Residues serine 715 and aspartate 759 each contribute to the glycine site. Residues 844–864 (MAGVFILVGVGIAGGVGLIII) form a helical membrane-spanning segment. The Cytoplasmic portion of the chain corresponds to 865–1004 (EVIYKKHQVK…YTSDVSHLVV (140 aa)). The segment at 980 to 1004 (TRPQQNILPPRYSPGYTSDVSHLVV) is disordered. The span at 994 to 1004 (GYTSDVSHLVV) shows a compositional bias: polar residues.

The protein belongs to the glutamate-gated ion channel (TC 1.A.10.1) family. As to quaternary structure, forms a heteromeric NMDA channel with Nmdar2.

It localises to the cell membrane. The protein localises to the postsynaptic cell membrane. Its subcellular location is the postsynaptic density. Its function is as follows. NMDA receptor subtype of glutamate-gated ion channels with high calcium permeability and voltage-dependent sensitivity to magnesium. Mediated by glycine. This protein plays a key role in synaptic plasticity, synaptogenesis, excitotoxicity, memory acquisition and learning. It mediates neuronal functions in glutamate neurotransmission. Is involved in the cell surface targeting of NMDA receptors. Plays a role in associative learning and in long-term memory consolidation. The sequence is that of Glutamate [NMDA] receptor subunit 1 from Drosophila persimilis (Fruit fly).